A 481-amino-acid chain; its full sequence is Ribulose bisphosphate carboxylase large chain (481 aa).

Positions 1–2 (MS) are excised as a propeptide. An N-acetylproline modification is found at Pro-3. N6,N6,N6-trimethyllysine is present on Lys-14. Substrate contacts are provided by Asn-123 and Thr-173. Lys-175 (proton acceptor) is an active-site residue. Lys-177 is a binding site for substrate. Lys-201, Asp-203, and Glu-204 together coordinate Mg(2+). The residue at position 201 (Lys-201) is an N6-carboxylysine. The Proton acceptor role is filled by His-294. Arg-295, His-327, and Ser-379 together coordinate substrate.

Belongs to the RuBisCO large chain family. Type I subfamily. In terms of assembly, heterohexadecamer of 8 large chains and 8 small chains; disulfide-linked. The disulfide link is formed within the large subunit homodimers. Mg(2+) is required as a cofactor. The disulfide bond which can form in the large chain dimeric partners within the hexadecamer appears to be associated with oxidative stress and protein turnover.

Its subcellular location is the plastid. It catalyses the reaction 2 (2R)-3-phosphoglycerate + 2 H(+) = D-ribulose 1,5-bisphosphate + CO2 + H2O. It carries out the reaction D-ribulose 1,5-bisphosphate + O2 = 2-phosphoglycolate + (2R)-3-phosphoglycerate + 2 H(+). Functionally, ruBisCO catalyzes two reactions: the carboxylation of D-ribulose 1,5-bisphosphate, the primary event in carbon dioxide fixation, as well as the oxidative fragmentation of the pentose substrate in the photorespiration process. Both reactions occur simultaneously and in competition at the same active site. The chain is Ribulose bisphosphate carboxylase large chain from Cuscuta gronovii (Common dodder).